A 273-amino-acid polypeptide reads, in one-letter code: Putative phosphoenolpyruvate synthase regulatory protein (273 aa).

153 to 160 is an ADP binding site; it reads GVSRCGKT.

Belongs to the pyruvate, phosphate/water dikinase regulatory protein family. PSRP subfamily.

The enzyme catalyses [pyruvate, water dikinase] + ADP = [pyruvate, water dikinase]-phosphate + AMP + H(+). It carries out the reaction [pyruvate, water dikinase]-phosphate + phosphate + H(+) = [pyruvate, water dikinase] + diphosphate. Functionally, bifunctional serine/threonine kinase and phosphorylase involved in the regulation of the phosphoenolpyruvate synthase (PEPS) by catalyzing its phosphorylation/dephosphorylation. This is Putative phosphoenolpyruvate synthase regulatory protein from Yersinia pseudotuberculosis serotype I (strain IP32953).